Reading from the N-terminus, the 327-residue chain is tRNA dimethylallyltransferase (327 aa).

14-21 (GPTASGKT) provides a ligand contact to ATP. Position 16–21 (16–21 (TASGKT)) interacts with substrate. Interaction with substrate tRNA stretches follow at residues 39-42 (DSAL) and 163-167 (QRIQR).

Belongs to the IPP transferase family. Monomer. It depends on Mg(2+) as a cofactor.

The catalysed reaction is adenosine(37) in tRNA + dimethylallyl diphosphate = N(6)-dimethylallyladenosine(37) in tRNA + diphosphate. In terms of biological role, catalyzes the transfer of a dimethylallyl group onto the adenine at position 37 in tRNAs that read codons beginning with uridine, leading to the formation of N6-(dimethylallyl)adenosine (i(6)A). This is tRNA dimethylallyltransferase from Xanthomonas oryzae pv. oryzae (strain PXO99A).